A 255-amino-acid polypeptide reads, in one-letter code: F-box/SPRY domain-containing protein 1 (255 aa).

Residues 3–51 (DPVAALCNYNVLEVIFSYLELDDLSHCSQVCKSWYHFLNDENSDVWRWH) enclose the F-box domain. A B30.2/SPRY domain is found at 61 to 253 (LKSDLLSSVS…VSMVYLGTPL (193 aa)).

Belongs to the FBXO45/Fsn family. In terms of assembly, component of an E3 ubiquitin ligase complex composed of hiw and Fsn.

It localises to the synapse. Its pathway is protein modification; protein ubiquitination. Functionally, required in the presynaptic motoneuron to down-regulate the levels of wnd and restrain synaptic terminal growth at the neuromuscular junction (NMJ). The protein is F-box/SPRY domain-containing protein 1 of Drosophila simulans (Fruit fly).